Here is a 255-residue protein sequence, read N- to C-terminus: Folate receptor alpha (255 aa).

The N-terminal stretch at 1–24 (MAHLMTVQLLLLVMWMAECAQSRA) is a signal peptide. 8 disulfides stabilise this stretch: Cys35/Cys63, Cys55/Cys103, Cys64/Cys107, Cys87/Cys173, Cys94/Cys144, Cys133/Cys207, Cys137/Cys187, and Cys150/Cys167. Residue Asn67 is glycosylated (N-linked (GlcNAc...) asparagine). Folate is bound by residues Asp101, Tyr105, 122 to 126 (WRKER), 155 to 160 (HKGWNW), and Ser194. Asn159 carries an N-linked (GlcNAc...) asparagine glycan. N-linked (GlcNAc...) asparagine glycosylation occurs at Asn199. Ser232 carries the GPI-anchor amidated serine lipid modification. A propeptide spans 233–255 (GAGFHGTWPLLCSLSLVLLWVIS) (removed in mature form).

This sequence belongs to the folate receptor family. The secreted form is derived from the membrane-bound form either by cleavage of the GPI anchor, or/and by proteolysis catalyzed by a metalloprotease. In terms of tissue distribution, detected in kidney proximal tubules (at protein level).

Its subcellular location is the cell membrane. The protein localises to the apical cell membrane. It is found in the basolateral cell membrane. It localises to the secreted. The protein resides in the cytoplasmic vesicle. Its subcellular location is the clathrin-coated vesicle. The protein localises to the endosome. Binds to folate and reduced folic acid derivatives and mediates delivery of 5-methyltetrahydrofolate and folate analogs into the interior of cells. Has high affinity for folate and folic acid analogs at neutral pH. Exposure to slightly acidic pH after receptor endocytosis triggers a conformation change that strongly reduces its affinity for folates and mediates their release. Required for normal embryonic development and normal cell proliferation. Required for renal folate reabsorption. The sequence is that of Folate receptor alpha (Folr1) from Mus musculus (Mouse).